We begin with the raw amino-acid sequence, 166 residues long: Small ribosomal subunit protein uS9 (166 aa).

Positions 135-166 are disordered; the sequence is KKAGFLTRDPRATERKKYGLKKARKAPQYSKR. Residues 142–151 are compositionally biased toward basic and acidic residues; it reads RDPRATERKK. Residues 152-166 show a composition bias toward basic residues; that stretch reads YGLKKARKAPQYSKR.

Belongs to the universal ribosomal protein uS9 family.

In Mycobacterium avium (strain 104), this protein is Small ribosomal subunit protein uS9.